The following is a 139-amino-acid chain: Transcription antitermination protein NusB (139 aa).

It belongs to the NusB family.

Involved in transcription antitermination. Required for transcription of ribosomal RNA (rRNA) genes. Binds specifically to the boxA antiterminator sequence of the ribosomal RNA (rrn) operons. This chain is Transcription antitermination protein NusB, found in Salmonella agona (strain SL483).